Reading from the N-terminus, the 693-residue chain is Glycine--tRNA ligase beta subunit (693 aa).

Belongs to the class-II aminoacyl-tRNA synthetase family. Tetramer of two alpha and two beta subunits.

It localises to the cytoplasm. The enzyme catalyses tRNA(Gly) + glycine + ATP = glycyl-tRNA(Gly) + AMP + diphosphate. The sequence is that of Glycine--tRNA ligase beta subunit from Shouchella clausii (strain KSM-K16) (Alkalihalobacillus clausii).